The sequence spans 162 residues: Succinate dehydrogenase assembly factor 2, mitochondrial (162 aa).

The transit peptide at 1–35 directs the protein to the mitochondrion; the sequence is MHNMFPALTKTLSLQGYKIINSQTGSAAWSCGRRW.

Belongs to the SDHAF2 family. As to quaternary structure, interacts with SDH1 within the SDH catalytic dimer.

It localises to the mitochondrion matrix. Its function is as follows. Plays an essential role in the assembly of succinate dehydrogenase (SDH), an enzyme complex (also referred to as respiratory complex II) that is a component of both the tricarboxylic acid (TCA) cycle and the mitochondrial electron transport chain, and which couples the oxidation of succinate to fumarate with the reduction of ubiquinone (coenzyme Q) to ubiquinol. Required for flavinylation (covalent attachment of FAD) of the flavoprotein subunit SDH1 of the SDH catalytic dimer. It is unclear whether it participates in the chemistry of FAD attachment (enzymatic function) or acts as a chaperone that maintains SDH1 in a conformation that is susceptible to autocatalytic FAD attachment. Does not bind FAD or FADH(2) in vitro. Involved in sporulation. Required for the full activation of the early meiotic inducer IME1. The protein is Succinate dehydrogenase assembly factor 2, mitochondrial of Saccharomyces cerevisiae (strain ATCC 204508 / S288c) (Baker's yeast).